A 635-amino-acid chain; its full sequence is Endo-1,4-beta-xylanase B (635 aa).

The GH10 domain occupies 1–337; that stretch reads MNLKTAYEPY…KEAYYAVLKA (337 aa). Glu-150 serves as the catalytic Proton donor. The Nucleophile role is filled by Glu-255.

It belongs to the glycosyl hydrolase 10 (cellulase F) family.

The enzyme catalyses Endohydrolysis of (1-&gt;4)-beta-D-xylosidic linkages in xylans.. Its pathway is glycan degradation; xylan degradation. Functionally, b.fibrisolvens is located in the rumen of ruminant animals, where it contributes to the animal's digestion of plant material by hydrolyzing hemicellulose with its xylanases. The chain is Endo-1,4-beta-xylanase B (xynB) from Butyrivibrio fibrisolvens.